We begin with the raw amino-acid sequence, 870 residues long: Aldehyde-alcohol dehydrogenase 2 (870 aa).

The active site involves C252. An NAD(+)-binding site is contributed by 431–436; it reads GCGSYG.

This sequence in the N-terminal section; belongs to the aldehyde dehydrogenase family. In the C-terminal section; belongs to the iron-containing alcohol dehydrogenase family. Seems to form a rod shaped homomer composed of at least 20 identical subunits. It depends on Zn(2+) as a cofactor. Fe(2+) serves as cofactor.

The catalysed reaction is a primary alcohol + NAD(+) = an aldehyde + NADH + H(+). It catalyses the reaction a secondary alcohol + NAD(+) = a ketone + NADH + H(+). The enzyme catalyses acetaldehyde + NAD(+) + CoA = acetyl-CoA + NADH + H(+). In terms of biological role, this enzyme has two NAD(+)-dependent activities: ADH and ACDH. May be a critical enzyme in the fermentative pathway. This is Aldehyde-alcohol dehydrogenase 2 (ADH2) from Entamoeba histolytica (strain ATCC 30459 / HM-1:IMSS / ABRM).